Consider the following 366-residue polypeptide: UDP-N-acetylglucosamine--N-acetylmuramyl-(pentapeptide) pyrophosphoryl-undecaprenol N-acetylglucosamine transferase (366 aa).

UDP-N-acetyl-alpha-D-glucosamine contacts are provided by residues threonine 10–glycine 12, asparagine 124, arginine 166, serine 196, and glutamine 297.

Belongs to the glycosyltransferase 28 family. MurG subfamily.

It localises to the cell membrane. It catalyses the reaction di-trans,octa-cis-undecaprenyl diphospho-N-acetyl-alpha-D-muramoyl-L-alanyl-D-glutamyl-meso-2,6-diaminopimeloyl-D-alanyl-D-alanine + UDP-N-acetyl-alpha-D-glucosamine = di-trans,octa-cis-undecaprenyl diphospho-[N-acetyl-alpha-D-glucosaminyl-(1-&gt;4)]-N-acetyl-alpha-D-muramoyl-L-alanyl-D-glutamyl-meso-2,6-diaminopimeloyl-D-alanyl-D-alanine + UDP + H(+). Its pathway is cell wall biogenesis; peptidoglycan biosynthesis. Functionally, cell wall formation. Catalyzes the transfer of a GlcNAc subunit on undecaprenyl-pyrophosphoryl-MurNAc-pentapeptide (lipid intermediate I) to form undecaprenyl-pyrophosphoryl-MurNAc-(pentapeptide)GlcNAc (lipid intermediate II). In Alkaliphilus metalliredigens (strain QYMF), this protein is UDP-N-acetylglucosamine--N-acetylmuramyl-(pentapeptide) pyrophosphoryl-undecaprenol N-acetylglucosamine transferase.